The chain runs to 558 residues: GPI mannosyltransferase 3 (558 aa).

A run of 4 helical transmembrane segments spans residues 53 to 73 (GLRSVLFPAVVALPFYLLKLL), 81 to 101 (VWFAPRVLQALVLTLIDVSVF), 164 to 184 (AYCGVRLYGNVIEALLVLLTL), and 190 to 210 (VPFLLLTGLASAIRVTSAVVL). N-linked (GlcNAc...) asparagine glycosylation occurs at Asn-220. A helical transmembrane segment spans residues 234–254 (IVLTGLIVLVAVLGGVMVLDY). Asn-275 carries an N-linked (GlcNAc...) asparagine glycan. The next 4 helical transmembrane spans lie at 292-312 (VLVGIVGPHVLFTIAAPLVLW), 323-343 (PVLGMLGIGAWTLGFYSLIDH), 348-368 (FVFVVIPLSLITAAFVLVRWS), and 372-392 (AVVVKMNRLFVLFNIVMIYLM).

This sequence belongs to the glycosyltransferase 22 family. PIGB subfamily.

The protein localises to the endoplasmic reticulum membrane. Its pathway is glycolipid biosynthesis; glycosylphosphatidylinositol-anchor biosynthesis. Its function is as follows. Mannosyltransferase involved in glycosylphosphatidylinositol-anchor biosynthesis. Transfers the third alpha-1,2-mannose to Man2-GlcN-acyl-PI during GPI precursor assembly. In Trypanosoma brucei brucei, this protein is GPI mannosyltransferase 3 (GPI10).